Here is a 232-residue protein sequence, read N- to C-terminus: Charged multivesicular body protein 4c (232 aa).

Disordered regions lie at residues Met-1–Gln-23 and Glu-172–Thr-232. Residues Met-1 to Val-153 are intramolecular interaction with C-terminus. A compositionally biased stretch (low complexity) spans Ser-11–Gln-23. Coiled-coil stretches lie at residues Ser-21–Glu-50 and Leu-125–Ser-182. An intramolecular interaction with N-terminus region spans residues Gln-154–Thr-232. Ser-210 is modified (phosphoserine; by AURKB).

Belongs to the SNF7 family. As to quaternary structure, probable core component of the endosomal sorting required for transport complex III (ESCRT-III). ESCRT-III components are thought to multimerize to form a flat lattice on the perimeter membrane of the endosome. Several assembly forms of ESCRT-III may exist that interact and act sequentially. Self-associates. Interacts with CHMP2A. Interacts with CHMP4A. Interacts with CHMP4B. Interacts with CHMP6. Interacts with VPS4A. Interacts with PDCD6IP; the interaction is direct. Phosphorylated at Ser-210 by AURKB during cytokinesis: together with ZFYVE19/ANCHR, phosphorylated CHMP4C retains abscission-competent VPS4 (VPS4A and/or VPS4B) at the midbody ring until abscission checkpoint signaling is terminated at late cytokinesis.

The protein localises to the cytoplasm. The protein resides in the cytosol. It is found in the late endosome membrane. It localises to the midbody. Its subcellular location is the midbody ring. Functionally, probable core component of the endosomal sorting required for transport complex III (ESCRT-III) which is involved in multivesicular bodies (MVBs) formation and sorting of endosomal cargo proteins into MVBs. MVBs contain intraluminal vesicles (ILVs) that are generated by invagination and scission from the limiting membrane of the endosome and mostly are delivered to lysosomes enabling degradation of membrane proteins, such as stimulated growth factor receptors, lysosomal enzymes and lipids. The MVB pathway appears to require the sequential function of ESCRT-O, -I,-II and -III complexes. ESCRT-III proteins mostly dissociate from the invaginating membrane before the ILV is released. The ESCRT machinery also functions in topologically equivalent membrane fission events, such as the terminal stages of cytokinesis. Key component of the cytokinesis checkpoint, a process required to delay abscission to prevent both premature resolution of intercellular chromosome bridges and accumulation of DNA damage: upon phosphorylation by AURKB, together with ZFYVE19/ANCHR, retains abscission-competent VPS4 (VPS4A and/or VPS4B) at the midbody ring until abscission checkpoint signaling is terminated at late cytokinesis. Deactivation of AURKB results in dephosphorylation of CHMP4C followed by its dissociation from ANCHR and VPS4 and subsequent abscission. ESCRT-III proteins are believed to mediate the necessary vesicle extrusion and/or membrane fission activities, possibly in conjunction with the AAA ATPase VPS4. CHMP4A/B/C are required for the exosomal release of SDCBP, CD63 and syndecan. The polypeptide is Charged multivesicular body protein 4c (Chmp4c) (Rattus norvegicus (Rat)).